A 502-amino-acid polypeptide reads, in one-letter code: Maturase K (502 aa).

Belongs to the intron maturase 2 family. MatK subfamily.

The protein localises to the plastid. Its subcellular location is the chloroplast. Its function is as follows. Usually encoded in the trnK tRNA gene intron. Probably assists in splicing its own and other chloroplast group II introns. The chain is Maturase K from Ehretia anacua (Sandpaper tree).